We begin with the raw amino-acid sequence, 355 residues long: Elongation factor Ts (355 aa).

The interval Thr82–Val85 is involved in Mg(2+) ion dislocation from EF-Tu.

This sequence belongs to the EF-Ts family.

The protein localises to the cytoplasm. Its function is as follows. Associates with the EF-Tu.GDP complex and induces the exchange of GDP to GTP. It remains bound to the aminoacyl-tRNA.EF-Tu.GTP complex up to the GTP hydrolysis stage on the ribosome. The sequence is that of Elongation factor Ts from Helicobacter pylori (strain Shi470).